The chain runs to 229 residues: 5'-methylthioadenosine/S-adenosylhomocysteine nucleosidase (229 aa).

Glutamate 12 acts as the Proton acceptor in catalysis. Residues glycine 78, isoleucine 152, and 173 to 174 (ME) each bind substrate. The active-site Proton donor is aspartate 197.

This sequence belongs to the PNP/UDP phosphorylase family. MtnN subfamily.

It catalyses the reaction S-adenosyl-L-homocysteine + H2O = S-(5-deoxy-D-ribos-5-yl)-L-homocysteine + adenine. The enzyme catalyses S-methyl-5'-thioadenosine + H2O = 5-(methylsulfanyl)-D-ribose + adenine. It carries out the reaction 5'-deoxyadenosine + H2O = 5-deoxy-D-ribose + adenine. Its pathway is amino-acid biosynthesis; L-methionine biosynthesis via salvage pathway; S-methyl-5-thio-alpha-D-ribose 1-phosphate from S-methyl-5'-thioadenosine (hydrolase route): step 1/2. Functionally, catalyzes the irreversible cleavage of the glycosidic bond in both 5'-methylthioadenosine (MTA) and S-adenosylhomocysteine (SAH/AdoHcy) to adenine and the corresponding thioribose, 5'-methylthioribose and S-ribosylhomocysteine, respectively. Also cleaves 5'-deoxyadenosine, a toxic by-product of radical S-adenosylmethionine (SAM) enzymes, into 5-deoxyribose and adenine. The sequence is that of 5'-methylthioadenosine/S-adenosylhomocysteine nucleosidase from Haemophilus influenzae (strain PittEE).